Reading from the N-terminus, the 798-residue chain is Phenylalanine--tRNA ligase beta subunit (798 aa).

A tRNA-binding domain is found at 39 to 148 (NPIFDGFLVG…EDIPIGKKIN (110 aa)). The B5 domain maps to 402 to 477 (SCSNKIKLYH…RIYNYNNIPL (76 aa)). Mg(2+) is bound by residues D455, D461, and D465. The FDX-ACB domain maps to 704 to 797 (SKYPTSRRDI…LKKKFQVVLR (94 aa)).

The protein belongs to the phenylalanyl-tRNA synthetase beta subunit family. Type 1 subfamily. As to quaternary structure, tetramer of two alpha and two beta subunits. Mg(2+) serves as cofactor.

The protein localises to the cytoplasm. The enzyme catalyses tRNA(Phe) + L-phenylalanine + ATP = L-phenylalanyl-tRNA(Phe) + AMP + diphosphate + H(+). The protein is Phenylalanine--tRNA ligase beta subunit (pheT) of Buchnera aphidicola subsp. Schizaphis graminum (strain Sg).